The sequence spans 272 residues: Biglycan (272 aa).

An N-terminal signal peptide occupies residues 1–16 (MWPLWLLASLLALSQA). Positions 17 to 37 (LPFEQKAFWDFTLDDGLPMLN) are excised as a propeptide. 2 O-linked (Xyl...) (glycosaminoglycan) serine glycosylation sites follow: S42 and S48. Positions 55 to 91 (ALPPTFSAMCPFGCHCHLRVVQCSDLGLKAVPKEISP) constitute an LRRNT domain. 2 disulfide bridges follow: C64–C70 and C68–C77. LRR repeat units follow at residues 92–113 (DTTL…DFKG), 116–137 (HLYA…PSAP), 138–161 (DGLK…DLPE), 162–183 (TLNE…DLLR), 186–209 (KLYR…SFLP), 210–232 (TLRE…PDLK), 233–254 (LLQV…DFCP), and 255–272 (VGFG…LFNN).

It belongs to the small leucine-rich proteoglycan (SLRP) family. SLRP class I subfamily. As to quaternary structure, homodimer. Forms a ternary complex with MFAP2 and ELN. Post-translationally, the two attached glycosaminoglycan chains can be either chondroitin sulfate or dermatan sulfate. Found in several connective tissues, especially in articular cartilages.

It is found in the secreted. It localises to the extracellular space. Its subcellular location is the extracellular matrix. Its function is as follows. May be involved in collagen fiber assembly. The chain is Biglycan (BGN) from Sus scrofa (Pig).